Consider the following 696-residue polypeptide: Glycine--tRNA ligase beta subunit (696 aa).

This sequence belongs to the class-II aminoacyl-tRNA synthetase family. In terms of assembly, tetramer of two alpha and two beta subunits.

It is found in the cytoplasm. The enzyme catalyses tRNA(Gly) + glycine + ATP = glycyl-tRNA(Gly) + AMP + diphosphate. The polypeptide is Glycine--tRNA ligase beta subunit (Methylorubrum extorquens (strain CM4 / NCIMB 13688) (Methylobacterium extorquens)).